The following is a 209-amino-acid chain: MQQGHFTSNSYHSKTLNSSSLPVSSKFSHTNDPDVEGVDNDSFSKALCNKDLDPSSTIRSVISSLLDSLQDKALQQSPNTSLSKLLLEDQDFGSLWLSLSFIFCNYWQPAMLILDSKSIHPLPLTDGEVLHRWECEVDSNNKTTIDLKYWYCSCSQFSYNAFNSSRSFDEPMPKNEQETWGGRCLSHHPTICSHILAASILRACHNLVI.

Positions 1 to 30 (MQQGHFTSNSYHSKTLNSSSLPVSSKFSHT) are enriched in polar residues. A disordered region spans residues 1–33 (MQQGHFTSNSYHSKTLNSSSLPVSSKFSHTNDP). The SWIM-type zinc-finger motif lies at 143–203 (TTIDLKYWYC…HILAASILRA (61 aa)).

Interacts with rdl1, rlp1 and srs2.

It is found in the cytoplasm. The protein localises to the nucleus. Its subcellular location is the nucleoplasm. Involved in early stages of the homologous recombination repair (HRR) pathway of double-stranded DNA breaks arising during DNA replication or induced by DNA-damaging agents. This chain is Zinc finger SWIM domain-containing protein sws1 (sws1), found in Schizosaccharomyces pombe (strain 972 / ATCC 24843) (Fission yeast).